Here is a 372-residue protein sequence, read N- to C-terminus: N-methyl-L-tryptophan oxidase (372 aa).

4 to 34 (DLIIIGSGSVGAAAGYYATRAGLNVLMTDAH) contacts FAD. An S-8alpha-FAD cysteine modification is found at C308.

The protein belongs to the MSOX/MTOX family. MTOX subfamily. As to quaternary structure, monomer. It depends on FAD as a cofactor.

The enzyme catalyses N(alpha)-methyl-L-tryptophan + O2 + H2O = L-tryptophan + formaldehyde + H2O2. Its function is as follows. Catalyzes the oxidative demethylation of N-methyl-L-tryptophan. The sequence is that of N-methyl-L-tryptophan oxidase from Shigella dysenteriae serotype 1 (strain Sd197).